We begin with the raw amino-acid sequence, 254 residues long: Thiazole synthase (254 aa).

The Schiff-base intermediate with DXP role is filled by Lys95. Residues Gly156, 182-183 (AG), and 204-205 (NT) contribute to the 1-deoxy-D-xylulose 5-phosphate site.

This sequence belongs to the ThiG family. In terms of assembly, homotetramer. Forms heterodimers with either ThiH or ThiS.

Its subcellular location is the cytoplasm. It catalyses the reaction [ThiS sulfur-carrier protein]-C-terminal-Gly-aminoethanethioate + 2-iminoacetate + 1-deoxy-D-xylulose 5-phosphate = [ThiS sulfur-carrier protein]-C-terminal Gly-Gly + 2-[(2R,5Z)-2-carboxy-4-methylthiazol-5(2H)-ylidene]ethyl phosphate + 2 H2O + H(+). It functions in the pathway cofactor biosynthesis; thiamine diphosphate biosynthesis. Its function is as follows. Catalyzes the rearrangement of 1-deoxy-D-xylulose 5-phosphate (DXP) to produce the thiazole phosphate moiety of thiamine. Sulfur is provided by the thiocarboxylate moiety of the carrier protein ThiS. In vitro, sulfur can be provided by H(2)S. The polypeptide is Thiazole synthase (Shewanella baltica (strain OS195)).